An 878-amino-acid polypeptide reads, in one-letter code: Leucine--tRNA ligase (878 aa).

Positions 56-66 (PYPSGKLHMGH) match the 'HIGH' region motif. A 'KMSKS' region motif is present at residues 630–634 (KMSKS). Lys633 contacts ATP.

The protein belongs to the class-I aminoacyl-tRNA synthetase family.

The protein resides in the cytoplasm. The catalysed reaction is tRNA(Leu) + L-leucine + ATP = L-leucyl-tRNA(Leu) + AMP + diphosphate. The polypeptide is Leucine--tRNA ligase (Prochlorococcus marinus (strain MIT 9313)).